The primary structure comprises 142 residues: MGASSLPPAWQLYLKDHRVSTFKNWPFLEGCACTPDRMAEAGFIHCPTENEPDLAQCFFCFKELEGWEPDDDPIEEHKKHSSGCAFLSVKKQFEELTLSEFLKLDKERAKNKIAKETNNKQKEFEETAKKVRCAIEQLAAAE.

One copy of the BIR repeat lies at 18 to 88 (RVSTFKNWPF…KHSSGCAFLS (71 aa)). The residue at position 20 (S20) is a Phosphoserine; by AURKC. N6-acetyllysine is present on K23. T34 carries the post-translational modification Phosphothreonine; by CDK1 and CDK15. T48 is subject to Phosphothreonine. Residues C57, C60, H77, and C84 each contribute to the Zn(2+) site. An N6-acetyllysine mark is found at K90, K110, K112, and K115. The residue at position 117 (T117) is a Phosphothreonine; by AURKB. K129 bears the N6-acetyllysine mark.

It belongs to the IAP family. As to quaternary structure, monomer or homodimer. Exists as a homodimer in the apo state and as a monomer in the CPC-bound state. The monomer protects cells against apoptosis more efficiently than the dimer. Only the dimeric form is capable of enhancing tubulin stability in cells. When phosphorylated, interacts with LAMTOR5/HBXIP; the resulting complex binds pro-CASP9, as well as active CASP9, but much less efficiently. Component of the chromosomal passenger complex (CPC) composed of at least BIRC5/survivin, CDCA8/borealin, INCENP, AURKB or AURKC; in the complex forms a triple-helix bundle-based subcomplex with INCENP and CDCA8. Interacts with JTB. Interacts (via BIR domain) with histone H3 phosphorylated at 'Thr-3' (H3pT3). Interacts with EVI5. Interacts with GTP-bound RAN in both the S and M phases of the cell cycle. Interacts with USP9X. Interacts with tubulin. Interacts with BIRC2/c-IAP1. The acetylated form at Lys-129 interacts with STAT3. The monomeric form deacetylated at Lys-129 interacts with XPO1/CRM1. The monomeric form interacts with XIAP/BIRC4. Both the dimeric and monomeric form can interact with DIABLO/SMAC. Interacts with BIRC6/bruce. Interacts with FBXL7; this interaction facilitates the polyubiquitination and subsequent proteasomal degradation of BIRC5 by the SCF(FBXL7) E3 ubiquitin-protein ligase complex. In terms of processing, ubiquitinated by the Cul9-RING ubiquitin-protein ligase complex, leading to its degradation. Ubiquitination is required for centrosomal targeting. Deubiquitinated by USP35 or USP38; leading to stabilization. Acetylation at Lys-129 results in its homodimerization, while deacetylation promotes the formation of monomers which heterodimerize with XPO1/CRM1 which facilitates its nuclear export. The acetylated form represses STAT3 transactivation. The dynamic equilibrium between its acetylation and deacetylation at Lys-129 determines its interaction with XPO1/CRM1, its subsequent subcellular localization, and its ability to inhibit STAT3 transactivation. Post-translationally, in vitro phosphorylation at Thr-117 by AURKB prevents interaction with INCENP and localization to mitotic chromosomes. Phosphorylation at Thr-48 by CK2 is critical for its mitotic and anti-apoptotic activities. Phosphorylation at Thr-34 by CDK15 is critical for its anti-apoptotic activity. Phosphorylation at Ser-20 by AURKC is critical for regulation of proper chromosome alignment and segregation, and possibly cytokinesis.

Its subcellular location is the cytoplasm. The protein resides in the nucleus. It localises to the chromosome. The protein localises to the centromere. It is found in the cytoskeleton. Its subcellular location is the spindle. The protein resides in the kinetochore. It localises to the midbody. In terms of biological role, multitasking protein that has dual roles in promoting cell proliferation and preventing apoptosis. Component of a chromosome passage protein complex (CPC) which is essential for chromosome alignment and segregation during mitosis and cytokinesis. Acts as an important regulator of the localization of this complex; directs CPC movement to different locations from the inner centromere during prometaphase to midbody during cytokinesis and participates in the organization of the center spindle by associating with polymerized microtubules. Involved in the recruitment of CPC to centromeres during early mitosis via association with histone H3 phosphorylated at 'Thr-3' (H3pT3) during mitosis. The complex with RAN plays a role in mitotic spindle formation by serving as a physical scaffold to help deliver the RAN effector molecule TPX2 to microtubules. May counteract a default induction of apoptosis in G2/M phase. The acetylated form represses STAT3 transactivation of target gene promoters. May play a role in neoplasia. Inhibitor of CASP3 and CASP7. Essential for the maintenance of mitochondrial integrity and function. In Canis lupus familiaris (Dog), this protein is Baculoviral IAP repeat-containing protein 5 (BIRC5).